Here is a 63-residue protein sequence, read N- to C-terminus: DNA-directed RNA polymerase 7 kDa subunit (63 aa).

The protein belongs to the poxviridae DNA-directed RNA polymerase 7 kDa subunit family. The DNA-dependent RNA polymerase used for intermediate and late genes expression consists of eight subunits 147 kDa, 133 kDa, 35 kDa, 30 kDa, 22 kDa, 19 kDa, 18 kDa and 7 kDa totalling more than 500 kDa in mass. The same holoenzyme, with the addition of the transcription-specificity factor RAP94, is used for early gene expression.

It localises to the virion. The enzyme catalyses RNA(n) + a ribonucleoside 5'-triphosphate = RNA(n+1) + diphosphate. Functionally, part of the DNA-dependent RNA polymerase which catalyzes the transcription of viral DNA into RNA using the four ribonucleoside triphosphates as substrates. Responsible for the transcription of early, intermediate and late genes. DNA-dependent RNA polymerase associates with the early transcription factor (ETF) thereby allowing the early genes transcription. Late transcription, and probably also intermediate transcription, require newly synthesized RNA polymerase. This chain is DNA-directed RNA polymerase 7 kDa subunit (RPO7), found in Myxoma virus (strain Lausanne) (MYXV).